The primary structure comprises 446 residues: Phosphoglucosamine mutase (446 aa).

Ser-100 (phosphoserine intermediate) is an active-site residue. 4 residues coordinate Mg(2+): Ser-100, Asp-241, Asp-243, and Asp-245. Ser-100 carries the phosphoserine modification.

Belongs to the phosphohexose mutase family. It depends on Mg(2+) as a cofactor. In terms of processing, activated by phosphorylation.

The catalysed reaction is alpha-D-glucosamine 1-phosphate = D-glucosamine 6-phosphate. Its function is as follows. Catalyzes the conversion of glucosamine-6-phosphate to glucosamine-1-phosphate. The chain is Phosphoglucosamine mutase from Methylorubrum extorquens (strain CM4 / NCIMB 13688) (Methylobacterium extorquens).